The following is a 253-amino-acid chain: tRNA pseudouridine synthase A (253 aa).

The Nucleophile role is filled by D52. Y111 lines the substrate pocket.

It belongs to the tRNA pseudouridine synthase TruA family. Homodimer.

The enzyme catalyses uridine(38/39/40) in tRNA = pseudouridine(38/39/40) in tRNA. Functionally, formation of pseudouridine at positions 38, 39 and 40 in the anticodon stem and loop of transfer RNAs. In Methylobacterium radiotolerans (strain ATCC 27329 / DSM 1819 / JCM 2831 / NBRC 15690 / NCIMB 10815 / 0-1), this protein is tRNA pseudouridine synthase A.